Consider the following 180-residue polypeptide: Cytidylate kinase (180 aa).

Residue 7 to 15 (GPPGSGTTT) coordinates ATP.

Belongs to the cytidylate kinase family. Type 2 subfamily.

It localises to the cytoplasm. It catalyses the reaction CMP + ATP = CDP + ADP. The catalysed reaction is dCMP + ATP = dCDP + ADP. This is Cytidylate kinase (cmk) from Archaeoglobus fulgidus (strain ATCC 49558 / DSM 4304 / JCM 9628 / NBRC 100126 / VC-16).